A 168-amino-acid chain; its full sequence is Large ribosomal subunit protein uL10 (168 aa).

Belongs to the universal ribosomal protein uL10 family. As to quaternary structure, part of the ribosomal stalk of the 50S ribosomal subunit. The N-terminus interacts with L11 and the large rRNA to form the base of the stalk. The C-terminus forms an elongated spine to which L12 dimers bind in a sequential fashion forming a multimeric L10(L12)X complex.

Forms part of the ribosomal stalk, playing a central role in the interaction of the ribosome with GTP-bound translation factors. The polypeptide is Large ribosomal subunit protein uL10 (Clostridioides difficile (strain 630) (Peptoclostridium difficile)).